An 807-amino-acid chain; its full sequence is cAMP-regulated phosphoprotein 21 (807 aa).

Positions M1–P127 are disordered. S2 is modified (N-acetylserine). Position 32 is a phosphoserine (S32). Residues S32–S57 adopt a coiled-coil conformation. S55 carries the phosphoserine; by PKA modification. Residues I89–S98 show a composition bias toward polar residues. Residues E101–P127 show a composition bias toward basic and acidic residues. S133 is subject to Phosphoserine. The R3H domain maps to R163–T226. The region spanning R227–S298 is the SUZ domain. Positions S245–R282 are disordered. Phosphoserine occurs at positions 265 and 298. Disordered stretches follow at residues L328–V434, G474–M536, S552–S576, and Q595–P627. A compositionally biased stretch (low complexity) spans G337 to E348. The segment covering T349 to R358 has biased composition (basic and acidic residues). Over residues A359–A380 the composition is skewed to polar residues. S361 and S381 each carry phosphoserine. Residues G401–S421 show a composition bias toward low complexity. The span at R422 to V434 shows a compositional bias: polar residues. Residues Q514–Q524 are compositionally biased toward pro residues. A compositionally biased stretch (low complexity) spans P525–Q535. Composition is skewed to polar residues over residues S552 to D563 and Q595 to L613. A Phosphoserine modification is found at S557. R650 carries the asymmetric dimethylarginine modification.

In terms of assembly, interacts with CALM1. Post-translationally, phosphorylation of isoform 2 at Ser-55 is enhanced upon dopamine D1 receptor activation and favors interaction with CALM1. Methylated by CARM1 at Arg-650 in immature thymocytes. Present at high levels in thymus and low levels in brain. In thymus, isoform 1 is specifically found in immature thymocytes (at protein level).

Its subcellular location is the cytoplasm. In terms of biological role, may act as a competitive inhibitor of calmodulin-dependent enzymes such as calcineurin in neurons. This Mus musculus (Mouse) protein is cAMP-regulated phosphoprotein 21 (Arpp21).